A 393-amino-acid chain; its full sequence is Na(+)/H(+) antiporter NhaA (393 aa).

The next 11 membrane-spanning stretches (helical) occupy residues Gly24–Ala44, Leu58–Leu78, Ile96–Phe116, Gly126–Gly146, Ile155–Phe175, Ser178–Met198, Ala214–Leu234, Val267–Val287, Val300–Val320, Gly338–Phe358, and Met369–Phe389.

The protein belongs to the NhaA Na(+)/H(+) (TC 2.A.33) antiporter family.

The protein localises to the cell inner membrane. It carries out the reaction Na(+)(in) + 2 H(+)(out) = Na(+)(out) + 2 H(+)(in). Na(+)/H(+) antiporter that extrudes sodium in exchange for external protons. This chain is Na(+)/H(+) antiporter NhaA, found in Rhizobium etli (strain ATCC 51251 / DSM 11541 / JCM 21823 / NBRC 15573 / CFN 42).